A 401-amino-acid polypeptide reads, in one-letter code: Imidazolonepropionase (401 aa).

Positions 66 and 68 each coordinate Fe(3+). 2 residues coordinate Zn(2+): His66 and His68. The 4-imidazolone-5-propanoate site is built by Arg75, Tyr138, and His171. N-formimidoyl-L-glutamate is bound at residue Tyr138. His236 lines the Fe(3+) pocket. His236 is a binding site for Zn(2+). Gln239 is a 4-imidazolone-5-propanoate binding site. Residue Asp311 participates in Fe(3+) binding. Asp311 is a Zn(2+) binding site. Positions 313 and 315 each coordinate N-formimidoyl-L-glutamate. Thr316 contacts 4-imidazolone-5-propanoate.

This sequence belongs to the metallo-dependent hydrolases superfamily. HutI family. Zn(2+) serves as cofactor. Requires Fe(3+) as cofactor.

It localises to the cytoplasm. It carries out the reaction 4-imidazolone-5-propanoate + H2O = N-formimidoyl-L-glutamate. The protein operates within amino-acid degradation; L-histidine degradation into L-glutamate; N-formimidoyl-L-glutamate from L-histidine: step 3/3. Functionally, catalyzes the hydrolytic cleavage of the carbon-nitrogen bond in imidazolone-5-propanoate to yield N-formimidoyl-L-glutamate. It is the third step in the universal histidine degradation pathway. This is Imidazolonepropionase from Pseudomonas fluorescens (strain Pf0-1).